Consider the following 552-residue polypeptide: MRFQSINEINLTSVWAQLHLHQRSTRHVEMRDLFEAESDRFLNFSIDLNGFLLDFSKNRITGRSLDLLVELSKVAGLSDWVEAARLGEQINTSEHRAVMHFALRASVDDVYSVDGQNVVPVVHRELRRCFDFSEKIRQKIWCGFNGSPIRDVVNIGIGGSDLGPRLAVQALHPYALSDIRVHFVSNLDGADLAQTLEGLDQATTLFIVSSKSFSTPETLDNAYAAKAWFLQKAQGSDVSKHFVAISSNVEAVKDFGIAPEQMFRFWDWVGGRYSVWSAIGLSVMIAIGERHFRAFLDGAREMDQHFFTAPHEKNIPVVMALLGVWYNTFYGAHTHAIMPYAHGLARLPAYLQQLDMESNGKRVGRFGEMLDFDTGPVVWGEVGVNSQHAFFQLLHQGTRLVPCDFILPLRSHYAIGQHHQQLVANCLAQTEALMRGKTDTEVLEELQAAGVTGELLDALLPQKVFPGNQPSNTIVIDELSPHFLGMLLAAYEHKVFVQGVIWGINSFDQWGVEYGKQLAKRIAPELASTKPPKHDSSTNALIERYRTRGCRS.

The Proton donor role is filled by Glu-357. Active-site residues include His-388 and Lys-516. Positions 525–552 (ELASTKPPKHDSSTNALIERYRTRGCRS) are disordered.

This sequence belongs to the GPI family.

It localises to the cytoplasm. It carries out the reaction alpha-D-glucose 6-phosphate = beta-D-fructose 6-phosphate. The protein operates within carbohydrate biosynthesis; gluconeogenesis. Its pathway is carbohydrate degradation; glycolysis; D-glyceraldehyde 3-phosphate and glycerone phosphate from D-glucose: step 2/4. Functionally, catalyzes the reversible isomerization of glucose-6-phosphate to fructose-6-phosphate. This Laribacter hongkongensis (strain HLHK9) protein is Glucose-6-phosphate isomerase.